An 86-amino-acid polypeptide reads, in one-letter code: Small ribosomal subunit protein uS15 (86 aa).

It belongs to the universal ribosomal protein uS15 family. In terms of assembly, part of the 30S ribosomal subunit. Forms a bridge to the 50S subunit in the 70S ribosome, contacting the 23S rRNA.

Its function is as follows. One of the primary rRNA binding proteins, it binds directly to 16S rRNA where it helps nucleate assembly of the platform of the 30S subunit by binding and bridging several RNA helices of the 16S rRNA. Forms an intersubunit bridge (bridge B4) with the 23S rRNA of the 50S subunit in the ribosome. This Endomicrobium trichonymphae protein is Small ribosomal subunit protein uS15.